A 241-amino-acid polypeptide reads, in one-letter code: Urease accessory protein UreF (241 aa).

It belongs to the UreF family. UreD, UreF and UreG form a complex that acts as a GTP-hydrolysis-dependent molecular chaperone, activating the urease apoprotein by helping to assemble the nickel containing metallocenter of UreC. The UreE protein probably delivers the nickel.

It localises to the cytoplasm. Its function is as follows. Required for maturation of urease via the functional incorporation of the urease nickel metallocenter. The polypeptide is Urease accessory protein UreF (Rhodopseudomonas palustris (strain BisB18)).